Consider the following 368-residue polypeptide: Alcohol dehydrogenase 6 (368 aa).

The residue at position 23 (serine 23) is a Phosphoserine. The Zn(2+) site is built by cysteine 47, histidine 69, cysteine 99, cysteine 102, cysteine 105, cysteine 113, and cysteine 175. NAD(+) is bound by residues 200–205 (GLGGVG), aspartate 224, lysine 229, and 293–295 (VGV).

The protein belongs to the zinc-containing alcohol dehydrogenase family. Class-V subfamily. Dimer. Requires Zn(2+) as cofactor. As to expression, stomach and liver.

Its subcellular location is the cytoplasm. It catalyses the reaction a primary alcohol + NAD(+) = an aldehyde + NADH + H(+). The catalysed reaction is a secondary alcohol + NAD(+) = a ketone + NADH + H(+). Its activity is regulated as follows. Inhibited partially by pyrazole (10 mM) in the reaction mixture containing 100 mM ethanol at pH 10.0. Alcohol dehydrogenase. Catalyzes the NAD-dependent oxidation of primary alcohols to the corresponding aldehydes. Oxidizes secondary alcohols to the corresponding ketones. This is Alcohol dehydrogenase 6 (ADH6) from Homo sapiens (Human).